Here is a 37-residue protein sequence, read N- to C-terminus: Large ribosomal subunit protein bL36 (37 aa).

It belongs to the bacterial ribosomal protein bL36 family.

The chain is Large ribosomal subunit protein bL36 from Streptomyces griseus subsp. griseus (strain JCM 4626 / CBS 651.72 / NBRC 13350 / KCC S-0626 / ISP 5235).